The sequence spans 347 residues: High mobility group protein 20A (347 aa).

2 stretches are compositionally biased toward polar residues: residues 1 to 10 (MENLMTSSTL) and 40 to 49 (SGATSSTNNP). Disordered regions lie at residues 1–113 (MENL…YVRF) and 179–211 (FSRK…TEVK). The span at 55–66 (LSQGQLLQSESS) shows a compositional bias: low complexity. A compositionally biased stretch (basic and acidic residues) spans 72 to 82 (NEQRHEDEQRS). Over residues 83–96 (KRGGWSKGRKRKKP) the composition is skewed to basic residues. Positions 103–171 (PKSPLTGYVR…RYMKELEQYQ (69 aa)) form a DNA-binding region, HMG box. Phosphoserine is present on Ser105. Over residues 182–211 (KTQDRQKGKSHRQDAARQATHDHEKETEVK) the composition is skewed to basic and acidic residues. Residues 229–273 (SKAREAELRQLRKSNMEFEERNAALQKHVESMRTAVEKLEVDVIQ) are a coiled coil.

In terms of assembly, interacts with DTNB. Ubiquitous.

The protein localises to the nucleus. Plays a role in neuronal differentiation as chromatin-associated protein. Acts as inhibitor of HMG20B. Overcomes the repressive effects of the neuronal silencer REST and induces the activation of neuronal-specific genes. Involved in the recruitment of the histone methyltransferase KMT2A/MLL1 and consequent increased methylation of histone H3 lysine 4. The chain is High mobility group protein 20A (HMG20A) from Homo sapiens (Human).